A 246-amino-acid polypeptide reads, in one-letter code: MKYDIIGDIHGCLQEFQNLTEKLGYNWSSGLPVHPDQRKLAFVGDITDRGPHSLRMIEIVWELVIHKKVAYYAPGNHCNKLYRFFLGRNVTIAHGLETTVAEYEALPSHKQNMIKEKFITLYEQSPLYHVLDEKRLLVCHAGIRQDYIGRQDKKVQTFVLYGDITGEKHADGSPVRRDWAKEYKGTTWIVYGHTPVKEPRFVNHTVNIDTGAVFGGKLTGLRYPEMETVSVPSSLPFVPEKFRPIS.

This sequence belongs to the PrpE family. Requires Ni(2+) as cofactor.

It carries out the reaction P(1),P(4)-bis(5'-guanosyl) tetraphosphate + H2O = GMP + GTP + 2 H(+). In terms of biological role, asymmetrically hydrolyzes Ap4p to yield AMP and ATP. The chain is Bis(5'-nucleosyl)-tetraphosphatase PrpE [asymmetrical] from Bacillus cereus (strain ZK / E33L).